A 610-amino-acid chain; its full sequence is ESX-5 secretion system protein EccA5 (610 aa).

Residue Gly-357–Thr-364 participates in ATP binding.

This sequence belongs to the CbxX/CfxQ family. In terms of assembly, part of the ESX-5 / type VII secretion system (T7SS), which is composed of cytosolic and membrane components.

The protein resides in the cytoplasm. Functionally, part of the ESX-5 specialized secretion system, which is responsible for the secretion of EsxN and a number of PE_PGRS and PPE proteins. EccA5 exhibits ATPase activity and may provide energy for the export of ESX-5 substrates. The sequence is that of ESX-5 secretion system protein EccA5 from Mycobacterium marinum (strain ATCC BAA-535 / M).